A 269-amino-acid polypeptide reads, in one-letter code: RBPJ-interacting and tubulin-associated protein 1 (269 aa).

A Nuclear export signal motif is present at residues 5–17 (VELAVSGMQTLGL). Disordered regions lie at residues 66 to 105 (VGKEASKALGAKGSCETTPSRGSTPTLTPRKKNKYRPISH) and 141 to 269 (LWTP…PPWK). Positions 80-92 (CETTPSRGSTPTL) are enriched in polar residues. The short motif at 92–108 (LTPRKKNKYRPISHTPS) is the Nuclear localization signal element. An interaction with RBPJ/RBPSUH region spans residues 128–156 (RMAKGDAAKLRALLWTPPPTPRGSHSPRP). The tract at residues 156–269 (PREAPLRAIH…ATQKPKPPWK (114 aa)) is interaction with tubulin. The span at 200-253 (HSLTHLNVPSTGHPATSAPHTNGPQDLRPSTSGVTFRSPLVTSRARSVSISVPS) shows a compositional bias: polar residues.

This sequence belongs to the RITA family. As to quaternary structure, interacts with RBPJ/RBPSUH.

Its subcellular location is the cytoplasm. It localises to the nucleus. The protein resides in the cytoskeleton. The protein localises to the microtubule organizing center. It is found in the centrosome. In terms of biological role, tubulin-binding protein that acts as a negative regulator of Notch signaling pathway. Shuttles between the cytoplasm and the nucleus and mediates the nuclear export of RBPJ/RBPSUH, thereby preventing the interaction between RBPJ/RBPSUH and NICD product of Notch proteins (Notch intracellular domain), leading to down-regulate Notch-mediated transcription. May play a role in neurogenesis. This is RBPJ-interacting and tubulin-associated protein 1 (RITA1) from Homo sapiens (Human).